The following is a 379-amino-acid chain: UDP-4-amino-4-deoxy-L-arabinose--oxoglutarate aminotransferase (379 aa).

K182 carries the N6-(pyridoxal phosphate)lysine modification.

It belongs to the DegT/DnrJ/EryC1 family. ArnB subfamily. As to quaternary structure, homodimer. Pyridoxal 5'-phosphate serves as cofactor.

It catalyses the reaction UDP-4-amino-4-deoxy-beta-L-arabinose + 2-oxoglutarate = UDP-beta-L-threo-pentopyranos-4-ulose + L-glutamate. It participates in nucleotide-sugar biosynthesis; UDP-4-deoxy-4-formamido-beta-L-arabinose biosynthesis; UDP-4-deoxy-4-formamido-beta-L-arabinose from UDP-alpha-D-glucuronate: step 2/3. It functions in the pathway bacterial outer membrane biogenesis; lipopolysaccharide biosynthesis. Functionally, catalyzes the conversion of UDP-4-keto-arabinose (UDP-Ara4O) to UDP-4-amino-4-deoxy-L-arabinose (UDP-L-Ara4N). The modified arabinose is attached to lipid A and is required for resistance to polymyxin and cationic antimicrobial peptides. In Klebsiella pneumoniae subsp. pneumoniae (strain ATCC 700721 / MGH 78578), this protein is UDP-4-amino-4-deoxy-L-arabinose--oxoglutarate aminotransferase.